The chain runs to 636 residues: MEDLTPTNTSLDTTTTNNDTTSDREAAPTTLNLTPTASESENSLSPVTAEDLIAKSIKEGCPKRTSNDFMFLQSMGEGAYSQVFRCREVATDAMFAVKVLQKSYLNRHQKMDAIIREKNILTYLSQECGGHPFVTQLYTHFHDQARIYFVIGLVENGDLGESLCHFGSFDMLTSKFFASEILTGLQFLHDNKIVHRDMKPDNVLIQKDGHILITDFGSAQAFGGLQLSQEGFTDANQASSRSSDSGSPPPTRFYSDEEVPEENTARRTTFVGTALYVSPEMLADGDVGPQTDIWGLGCILFQCLAGQPPFRAVNQYHLLKRIQELDFSFPEGFPEEASEIIAKILVRDPSTRITSQELMAHKFFENVDWVNIANIKPPVLHAYIPATFGEPEYYSNIGPVEPGLDDRALFRLMNLGNDASASQPSTFRPSNVEHRGDPFVSEIAPRANSEAEKNRAARAQKLEEQRVKNPFHIFTNNSLILKQGYLEKKRGLFARRRMFLLTEGPHLLYIDVPNLVLKGEVPWTPCMQVELKNSGTFFIHTPNRVYYLFDLEKKADEWCKAINDVRKRYSVTIEKTFNSAMRDGTFGSIYGKKKSRKEMMREQKALRRKQEKEEKKALKAEQVSKKLSMQMDKKSP.

Composition is skewed to low complexity over residues 1-20 and 27-37; these read MEDLTPTNTSLDTTTTNNDT and APTTLNLTPTA. The interval 1-45 is disordered; the sequence is MEDLTPTNTSLDTTTTNNDTTSDREAAPTTLNLTPTASESENSLS. In terms of domain architecture, Protein kinase spans 69-364; it reads FMFLQSMGEG…SQELMAHKFF (296 aa). Residues 79–81 and lysine 98 each bind ATP; that span reads AYS. A PIF-pocket region spans residues 100–149; it reads LQKSYLNRHQKMDAIIREKNILTYLSQECGGHPFVTQLYTHFHDQARIYF. Residues 152 to 154 and aspartate 158 each bind ATP; that span reads GLV. Residue aspartate 197 is the Proton acceptor of the active site. Residues aspartate 201 and aspartate 215 each contribute to the ATP site. Disordered stretches follow at residues 233 to 264 and 593 to 636; these read TDANQASSRSSDSGSPPPTRFYSDEEVPEENT and KKSR…KKSP. A coiled-coil region spans residues 550–631; the sequence is DLEKKADEWC…QVSKKLSMQM (82 aa). A compositionally biased stretch (basic and acidic residues) spans 597 to 624; it reads KEMMREQKALRRKQEKEEKKALKAEQVS.

The protein belongs to the protein kinase superfamily. AGC Ser/Thr protein kinase family. PDPK1 subfamily. As to quaternary structure, interacts directly with sgk-1, akt-1 and akt-2.

It is found in the cytoplasm. The enzyme catalyses L-seryl-[protein] + ATP = O-phospho-L-seryl-[protein] + ADP + H(+). It catalyses the reaction L-threonyl-[protein] + ATP = O-phospho-L-threonyl-[protein] + ADP + H(+). Its function is as follows. Involved in the daf-2/insulin receptor-like transduction pathway, which controls longevity and prevents developmental arrest at the dauer stage. Phosphorylates and activates sgk-1, akt-1 and akt-2. In Caenorhabditis elegans, this protein is 3-phosphoinositide-dependent protein kinase 1.